The primary structure comprises 328 residues: L-lactate dehydrogenase (328 aa).

Residues Val18, Glu39, Lys46, Tyr71, and 85–86 (GA) contribute to the NAD(+) site. Substrate-binding residues include Gln88 and Arg94. Residues Ser107, 124-126 (AAN), and Ser149 contribute to the NAD(+) site. 126-129 (NPVD) contributes to the substrate binding site. 154–157 (DSAR) is a binding site for substrate. Positions 159 and 174 each coordinate beta-D-fructose 1,6-bisphosphate. The Proton acceptor role is filled by His181. Tyr226 is subject to Phosphotyrosine. Thr235 lines the substrate pocket.

This sequence belongs to the LDH/MDH superfamily. LDH family. Homotetramer.

The protein localises to the cytoplasm. The enzyme catalyses (S)-lactate + NAD(+) = pyruvate + NADH + H(+). It participates in fermentation; pyruvate fermentation to lactate; (S)-lactate from pyruvate: step 1/1. Its activity is regulated as follows. Allosterically activated by fructose 1,6-bisphosphate (FBP). Functionally, catalyzes the conversion of lactate to pyruvate. This is L-lactate dehydrogenase from Streptococcus thermophilus (strain ATCC BAA-250 / LMG 18311).